The chain runs to 691 residues: MEVLISRYRNIGIMAHIDAGKTTTTERILFYTGKQNRIGEVHDGAASMDWMEQEKERGITITSAATTCFWNDHRINIIDTPGHVDFTIEVERSLRVLDGAVAVFDGVAGVEPQSETVWRQADKYNVPRICFVNKMDRIGANFYRCVDMIKTKLGASPLVIQLPIGSEKDFKGIIDLISMKAIIWQEETLGAKFSYEDIPSDLLDKAQEYRNLLLDAAAEMDDEAINTYFESNDLPIDLLKKCVRSGTIKGKFVPVLCGSAFKNKGVQSLLDGVVDFLPSPIDVDVIIGTDPKDSEKKIEIKPSEKEKFVALAFKVMTDKFVGSLTFIRIYSGKLKSKSAVLNAGKNETEGIGRMLLMHANNREDINEAKVGDIVALVGLKKTITGDTLCSSDFPILLERMEFPDPVIEIAIEPKTTSDQEKLGVALNRLVAEDPSLRMSVNAESGQTILKGMGELHLEIIIDRMKREFNVEANVGAPQVAYRETITKSVEIDYTHKKQSGGAGQFAKVKIKFEPLEPGFGFQFESKIVGGAIPKEYIPGVQNGLELIKEGGIISGFPLIDFKATLLDGAFHDVDSSPLAFELAAKGAFKEMANKAGPKMLEPIMKVEIITPEEYMGDVMGDINSRRGSVVDMLDLGNNSKIITASVPLANMFGYINVLRSISQGRAQYSMHFSCYEQVPQYVVDELKLKYN.

In terms of domain architecture, tr-type G spans 6–281 (SRYRNIGIMA…GVVDFLPSPI (276 aa)). Residues 15 to 22 (AHIDAGKT), 79 to 83 (DTPGH), and 133 to 136 (NKMD) each bind GTP.

This sequence belongs to the TRAFAC class translation factor GTPase superfamily. Classic translation factor GTPase family. EF-G/EF-2 subfamily.

It localises to the cytoplasm. In terms of biological role, catalyzes the GTP-dependent ribosomal translocation step during translation elongation. During this step, the ribosome changes from the pre-translocational (PRE) to the post-translocational (POST) state as the newly formed A-site-bound peptidyl-tRNA and P-site-bound deacylated tRNA move to the P and E sites, respectively. Catalyzes the coordinated movement of the two tRNA molecules, the mRNA and conformational changes in the ribosome. This chain is Elongation factor G, found in Wolbachia pipientis subsp. Culex pipiens (strain wPip).